Here is a 309-residue protein sequence, read N- to C-terminus: Methionyl-tRNA formyltransferase (309 aa).

Residue 110–113 (SLLP) participates in (6S)-5,6,7,8-tetrahydrofolate binding. Positions 289-309 (KRMAATDWARGSRIEQGERLK) are disordered. Over residues 298 to 309 (RGSRIEQGERLK) the composition is skewed to basic and acidic residues.

It belongs to the Fmt family.

The catalysed reaction is L-methionyl-tRNA(fMet) + (6R)-10-formyltetrahydrofolate = N-formyl-L-methionyl-tRNA(fMet) + (6S)-5,6,7,8-tetrahydrofolate + H(+). Functionally, attaches a formyl group to the free amino group of methionyl-tRNA(fMet). The formyl group appears to play a dual role in the initiator identity of N-formylmethionyl-tRNA by promoting its recognition by IF2 and preventing the misappropriation of this tRNA by the elongation apparatus. In Saccharopolyspora erythraea (strain ATCC 11635 / DSM 40517 / JCM 4748 / NBRC 13426 / NCIMB 8594 / NRRL 2338), this protein is Methionyl-tRNA formyltransferase.